The chain runs to 419 residues: 4-hydroxyphenylpyruvate dioxygenase (419 aa).

2 VOC domains span residues 37–185 and 216–376; these read GYDH…LLSR and RIDH…LFTR. Positions 219, 302, and 387 each coordinate Fe cation.

This sequence belongs to the 4HPPD family. The cofactor is Fe cation.

The enzyme catalyses 3-(4-hydroxyphenyl)pyruvate + O2 = homogentisate + CO2. The protein operates within amino-acid degradation; L-phenylalanine degradation; acetoacetate and fumarate from L-phenylalanine: step 3/6. The sequence is that of 4-hydroxyphenylpyruvate dioxygenase (HPD4) from Pyricularia oryzae (strain 70-15 / ATCC MYA-4617 / FGSC 8958) (Rice blast fungus).